The following is a 526-amino-acid chain: GMP synthase [glutamine-hydrolyzing] (526 aa).

The Glutamine amidotransferase type-1 domain occupies 13-204 (TVLVVDFGAQ…LYRGAGLSPD (192 aa)). Residue Cys90 is the Nucleophile of the active site. Residues His178 and Glu180 contribute to the active site. Residues 205–400 (WTTGNVIEEQ…LGLPDEIVQR (196 aa)) enclose the GMPS ATP-PPase domain. An ATP-binding site is contributed by 232–238 (SGGVDSA).

In terms of assembly, homodimer.

The catalysed reaction is XMP + L-glutamine + ATP + H2O = GMP + L-glutamate + AMP + diphosphate + 2 H(+). The protein operates within purine metabolism; GMP biosynthesis; GMP from XMP (L-Gln route): step 1/1. Catalyzes the synthesis of GMP from XMP. This Streptomyces coelicolor (strain ATCC BAA-471 / A3(2) / M145) protein is GMP synthase [glutamine-hydrolyzing] (guaA).